The sequence spans 167 residues: Peptidyl-prolyl cis-trans isomerase-like 3 (167 aa).

In terms of domain architecture, PPIase cyclophilin-type spans 1-153 (MSVTLHTNLG…QEIKLLNVTV (153 aa)).

The protein belongs to the cyclophilin-type PPIase family. PPIL3 subfamily.

It catalyses the reaction [protein]-peptidylproline (omega=180) = [protein]-peptidylproline (omega=0). In terms of biological role, PPIases accelerate the folding of proteins. It catalyzes the cis-trans isomerization of proline imidic peptide bonds in oligopeptides. In Cryptococcus neoformans var. neoformans serotype D (strain B-3501A) (Filobasidiella neoformans), this protein is Peptidyl-prolyl cis-trans isomerase-like 3 (CYP10).